A 72-amino-acid chain; its full sequence is MAFSNPFDDPQGAFYILRNAQGQFSLWPQQCVLPAGWDIVCQPQSQASCQQWLEAHWRTLTPTNFTQLQEAQ.

It belongs to the MbtH-like family.

In terms of biological role, involved in the biosynthesis of the siderophore enterobactin (enterochelin), which is a macrocyclic trimeric lactone of N-(2,3-dihydroxybenzoyl)-serine. Plays a role in the catalytic function of EntF. It is required for adenylation of amino acids in non-ribosomal peptide biosynthesis. The chain is Enterobactin biosynthesis protein YbdZ from Escherichia coli (strain K12).